The primary structure comprises 365 residues: Solute carrier family 35 member G1 (365 aa).

The disordered stretch occupies residues 1–33; sequence MRPQDSTGVAELQEPGLPLTDDAPPGATEEPAA. Positions 23 to 33 are enriched in low complexity; it reads APPGATEEPAA. 10 consecutive transmembrane segments (helical) span residues 69-89, 97-117, 131-151, 156-176, 187-207, 222-242, 252-272, 286-306, 311-333, and 338-357; these read GLGL…SLFV, AVEI…PCLI, IFLI…YYAY, LADA…FAWI, ALFT…PFLF, LKGT…LVIL, FLSI…ILSV, LFLI…TKAL, AGPV…IIFF, and TWWT…GAAI. EamA domains follow at residues 80–202 and 233–357; these read FLFS…LIVR and VFAA…GAAI.

The protein belongs to the TMEM20 family. As to quaternary structure, interacts with STIM1; stimulated by depletion of intracellular calcium. Interacts with ORAI1. Interacts with the plasma membrane calcium-transporting ATPases ATP2B1 and ATP2B4. Interacts with ATP1A1, ATP2A2, KPNB1 and XPO1. In terms of tissue distribution, ubiquitously expressed.

The protein resides in the cell membrane. It is found in the endoplasmic reticulum membrane. Functionally, may play a role in intracellular calcium sensing and homeostasis. May act as a negative regulator of plasma membrane calcium-transporting ATPases preventing calcium efflux from the cell. The protein is Solute carrier family 35 member G1 (SLC35G1) of Homo sapiens (Human).